The following is a 124-amino-acid chain: Small ribosomal subunit protein bS6m (124 aa).

The protein belongs to the bacterial ribosomal protein bS6 family. As to quaternary structure, component of the mitochondrial ribosome small subunit (28S) which comprises a 12S rRNA and about 30 distinct proteins.

It localises to the mitochondrion. The protein is Small ribosomal subunit protein bS6m (MRPS6) of Bos taurus (Bovine).